We begin with the raw amino-acid sequence, 94 residues long: Small ribosomal subunit protein uS17 (94 aa).

This sequence belongs to the universal ribosomal protein uS17 family. In terms of assembly, part of the 30S ribosomal subunit.

In terms of biological role, one of the primary rRNA binding proteins, it binds specifically to the 5'-end of 16S ribosomal RNA. The polypeptide is Small ribosomal subunit protein uS17 (Streptomyces griseus subsp. griseus (strain JCM 4626 / CBS 651.72 / NBRC 13350 / KCC S-0626 / ISP 5235)).